Here is a 1755-residue protein sequence, read N- to C-terminus: Transposon Ty1-DR1 Gag-Pol polyprotein (1755 aa).

Composition is skewed to polar residues over residues 1-10 (MESQQLSNYP), 48-60 (TKAN…TPAS), and 127-152 (QSQF…GNTF). Disordered stretches follow at residues 1–93 (MESQ…MMTQ), 126–173 (PQSQ…RPPP), and 352–421 (GSRN…SKST). Positions 153–165 (TDSSSADSDMTST) are enriched in low complexity. The RNA-binding stretch occupies residues 299–401 (NNGIHINNKV…NSKSKTARAH (103 aa)). Residues 402–418 (NVSTSNNSPSTDNDSIS) show a composition bias toward low complexity. Residue Ser416 is modified to Phosphoserine. Asp461 serves as the catalytic For protease activity; shared with dimeric partner. Positions 583 to 640 (NVHTSESTRKYPYPFIHRMLAHANAQTIRYSLKNNTITYFNESDVDWSSAIDYQCPDC) are integrase-type zinc finger-like. Residues 660–835 (NSYEPFQYLH…AGLDISTLLP (176 aa)) enclose the Integrase catalytic domain. Asp671 and Asp736 together coordinate Mg(2+). Disordered regions lie at residues 956 to 1087 (SKAV…ETEK), 1092 to 1111 (RSPS…NIVP), and 1130 to 1187 (DLPL…DNET). The span at 960 to 969 (SPTDSTPPST) shows a compositional bias: low complexity. Polar residues predominate over residues 1005–1015 (STPQISNIEST). Over residues 1038–1053 (ESSHASKSKDFRHSDS) the composition is skewed to basic and acidic residues. Polar residues-rich tracts occupy residues 1054 to 1082 (YSEN…QISD) and 1101 to 1111 (PENNSSHNIVP). Positions 1178–1212 (KKRSLEDNETEIKVSRDTWNTKNMRSLEPPRSKKR) match the Bipartite nuclear localization signal motif. A Reverse transcriptase Ty1/copia-type domain is found at 1338–1476 (NNYYITQLDI…DILGLEIKYQ (139 aa)). Residues Asp1346, Asp1427, Asp1428, Asp1610, Glu1652, and Asp1685 each contribute to the Mg(2+) site. Residues 1610–1752 (DASYGNQPYY…IKTFKLLTNK (143 aa)) enclose the RNase H Ty1/copia-type domain.

The capsid protein forms a homotrimer, from which the VLPs are assembled. The protease is a homodimer, whose active site consists of two apposed aspartic acid residues. Initially, virus-like particles (VLPs) are composed of the structural unprocessed proteins Gag and Gag-Pol, and also contain the host initiator methionine tRNA (tRNA(i)-Met) which serves as a primer for minus-strand DNA synthesis, and a dimer of genomic Ty RNA. Processing of the polyproteins occurs within the particle and proceeds by an ordered pathway, called maturation. First, the protease (PR) is released by autocatalytic cleavage of the Gag-Pol polyprotein yielding capsid protein p45 and a Pol-p154 precursor protein. This cleavage is a prerequisite for subsequent processing of Pol-p154 at the remaining sites to release the mature structural and catalytic proteins. Maturation takes place prior to the RT reaction and is required to produce transposition-competent VLPs.

The protein localises to the cytoplasm. Its subcellular location is the nucleus. The enzyme catalyses DNA(n) + a 2'-deoxyribonucleoside 5'-triphosphate = DNA(n+1) + diphosphate. The catalysed reaction is Endonucleolytic cleavage to 5'-phosphomonoester.. Its function is as follows. Capsid protein (CA) is the structural component of the virus-like particle (VLP), forming the shell that encapsulates the retrotransposons dimeric RNA genome. The particles are assembled from trimer-clustered units and there are holes in the capsid shells that allow for the diffusion of macromolecules. CA also has nucleocapsid-like chaperone activity, promoting primer tRNA(i)-Met annealing to the multipartite primer-binding site (PBS), dimerization of Ty1 RNA and initiation of reverse transcription. Functionally, the aspartyl protease (PR) mediates the proteolytic cleavages of the Gag and Gag-Pol polyproteins after assembly of the VLP. In terms of biological role, reverse transcriptase/ribonuclease H (RT) is a multifunctional enzyme that catalyzes the conversion of the retro-elements RNA genome into dsDNA within the VLP. The enzyme displays a DNA polymerase activity that can copy either DNA or RNA templates, and a ribonuclease H (RNase H) activity that cleaves the RNA strand of RNA-DNA heteroduplexes during plus-strand synthesis and hydrolyzes RNA primers. The conversion leads to a linear dsDNA copy of the retrotransposon that includes long terminal repeats (LTRs) at both ends. Integrase (IN) targets the VLP to the nucleus, where a subparticle preintegration complex (PIC) containing at least integrase and the newly synthesized dsDNA copy of the retrotransposon must transit the nuclear membrane. Once in the nucleus, integrase performs the integration of the dsDNA into the host genome. This chain is Transposon Ty1-DR1 Gag-Pol polyprotein (TY1B-DR1), found in Saccharomyces cerevisiae (strain ATCC 204508 / S288c) (Baker's yeast).